The primary structure comprises 478 residues: Muscarinic acetylcholine receptor M4 (478 aa).

The Extracellular segment spans residues 1 to 30; sequence MXNFTPVNGSSANQSVRLVTAAHNHLETVE. 2 N-linked (GlcNAc...) asparagine glycosylation sites follow: asparagine 8 and asparagine 13. A helical membrane pass occupies residues 31-53; the sequence is MVFIATVTGSLSLVTVVGNILVM. Topologically, residues 54–67 are cytoplasmic; it reads LSIKVNRQLQTVNN. The helical transmembrane segment at 68 to 88 threads the bilayer; it reads YFLFSLGCADLIIGAFSMNLY. Residues 89–105 lie on the Extracellular side of the membrane; that stretch reads TLYIIKGYWPLGAVVCD. A disulfide bridge connects residues cysteine 104 and cysteine 184. Residues 106–127 form a helical membrane-spanning segment; sequence LWLALDYVVSNASVMNLLIISF. At 128–147 the chain is on the cytoplasmic side; it reads DRYFCVTKPLTYPARRTTKM. Residues 148–170 form a helical membrane-spanning segment; sequence AGLMIAAAWVLSFVLWAPAILFW. Topologically, residues 171-192 are extracellular; that stretch reads QFVVGKRTVPDNQCFIQFLSNP. A helical membrane pass occupies residues 193-215; it reads AVTFGTAIAAFYLPVVIMTVLYI. At 216–400 the chain is on the cytoplasmic side; that stretch reads HISLASRSRV…AARERKVTRT (185 aa). A disordered region spans residues 271–333; sequence LEEAPPPALP…APTLQPRTLN (63 aa). Residues 274-285 show a composition bias toward pro residues; sequence APPPALPPPPRP. Residues 293 to 303 show a composition bias toward polar residues; sequence NESSSGSATQN. Residues 310-332 show a composition bias toward low complexity; it reads TELSTAEATTPALPAPTLQPRTL. The chain crosses the membrane as a helical span at residues 401 to 421; that stretch reads IFAILLAFILTWTPYNVMVLV. Topologically, residues 422 to 435 are extracellular; that stretch reads NTFCQSCIPERVWS. The helical transmembrane segment at 436–455 threads the bilayer; sequence IGYWLCYVNSTINPACYALC. Residues 456–478 lie on the Cytoplasmic side of the membrane; sequence NATFKKTFRHLLLCQYRNIGTAR. Phosphothreonine is present on residues threonine 458, threonine 462, and threonine 476.

It belongs to the G-protein coupled receptor 1 family. Muscarinic acetylcholine receptor subfamily. CHRM4 sub-subfamily.

The protein resides in the cell membrane. It localises to the postsynaptic cell membrane. In terms of biological role, the muscarinic acetylcholine receptor mediates various cellular responses, including inhibition of adenylate cyclase, breakdown of phosphoinositides and modulation of potassium channels through the action of G proteins. Primary transducing effect is inhibition of adenylate cyclase. In Rattus norvegicus (Rat), this protein is Muscarinic acetylcholine receptor M4 (Chrm4).